Reading from the N-terminus, the 669-residue chain is DNA ligase (669 aa).

NAD(+) is bound by residues 32 to 36 (DAEYD), 81 to 82 (SL), and Glu-113. The active-site N6-AMP-lysine intermediate is the Lys-115. NAD(+) is bound by residues Arg-136, Glu-173, Lys-290, and Lys-314. Residues Cys-408, Cys-411, Cys-426, and Cys-432 each coordinate Zn(2+). Residues 592–669 (AVDSALAGKI…DEQALIEFLK (78 aa)) form the BRCT domain.

This sequence belongs to the NAD-dependent DNA ligase family. LigA subfamily. Mg(2+) serves as cofactor. Mn(2+) is required as a cofactor.

It catalyses the reaction NAD(+) + (deoxyribonucleotide)n-3'-hydroxyl + 5'-phospho-(deoxyribonucleotide)m = (deoxyribonucleotide)n+m + AMP + beta-nicotinamide D-nucleotide.. Its function is as follows. DNA ligase that catalyzes the formation of phosphodiester linkages between 5'-phosphoryl and 3'-hydroxyl groups in double-stranded DNA using NAD as a coenzyme and as the energy source for the reaction. It is essential for DNA replication and repair of damaged DNA. The polypeptide is DNA ligase (Vibrio cholerae serotype O1 (strain ATCC 39315 / El Tor Inaba N16961)).